Here is a 797-residue protein sequence, read N- to C-terminus: Inulosucrase (797 aa).

The N-terminal stretch at 1-36 is a signal peptide; the sequence is MLENKNHKKISLSGKSLLMGTLSTAAIVLSASTANA. Residues 54–64 are compositionally biased toward polar residues; that stretch reads ASSVNNENNKQ. The interval 54-176 is disordered; sequence ASSVNNENNK…SVKPAENATK (123 aa). 2 stretches are compositionally biased toward basic and acidic residues: residues 65–75 and 82–95; these read VTEKDSADKST and ANTKKSNENTETTE. A compositionally biased stretch (low complexity) spans 130 to 139; that stretch reads DQKTTNAATT. The span at 140 to 167 shows a compositional bias: basic and acidic residues; that stretch reads DTKKDDVKQVEKKDSVDKTNAEENKDSS. Tryptophan 271 contacts substrate. Aspartate 272 functions as the Nucleophile in the catalytic mechanism. Ca(2+) is bound at residue asparagine 317. Residue serine 340 participates in substrate binding. Aspartate 419 provides a ligand contact to Ca(2+). 424 to 425 contacts substrate; that stretch reads RD. Ca(2+) contacts are provided by glutamine 450, tryptophan 487, asparagine 489, and aspartate 521. Substrate is bound by residues 522–524 and arginine 542; that span reads EIE. Glutamate 524 functions as the Proton donor/acceptor in the catalytic mechanism. Ca(2+) is bound by residues aspartate 660, isoleucine 662, and serine 667. The tract at residues 708–766 is disordered; that stretch reads QPVTPIPNVPTTPETPTTPDKPEVPTTPEVPTTPETPTPEAPKNPVKKTSQSKLPKAGD. A compositionally biased stretch (low complexity) spans 718–740; sequence TTPETPTTPDKPEVPTTPEVPTT. An LPXTG sorting signal motif is present at residues 761 to 765; the sequence is LPKAG. Alanine 764 bears the Pentaglycyl murein peptidoglycan amidated alanine mark. A propeptide spans 765–797 (removed by sortase); it reads GDKNSFAAVVLGAVSSILGAVGLTGVSKRKRNN.

This sequence belongs to the glycosyl hydrolase 68 family. Ca(2+) serves as cofactor.

It is found in the secreted. The protein resides in the cell wall. The enzyme catalyses [(2-&gt;1)-beta-D-fructosyl](n) + sucrose = [(2-&gt;1)-beta-D-fructosyl](n+1) + D-glucose. Its function is as follows. Fructosyltransferase that catalyzes the polymerization of the fructose moiety of sucrose to produce inulin polymer and inulin oligosaccharides such as 1-kestose and nystose. The protein is Inulosucrase of Lactobacillus johnsonii (strain CNCM I-12250 / La1 / NCC 533).